Here is a 406-residue protein sequence, read N- to C-terminus: Protein ALP1-like (406 aa).

Residues 8–15 carry the Nuclear localization signal motif; sequence KKKKRAEK. The 167-residue stretch at 187 to 353 folds into the DDE Tnp4 domain; the sequence is IDITHIVMNL…IIFVCCLLHN (167 aa). Residues aspartate 188, aspartate 240, and aspartate 279 each coordinate a divalent metal cation.

The protein belongs to the HARBI1 family. The cofactor is a divalent metal cation.

It localises to the nucleus. Its function is as follows. Transposase-derived protein that may have nuclease activity. The sequence is that of Protein ALP1-like from Arabidopsis thaliana (Mouse-ear cress).